Reading from the N-terminus, the 233-residue chain is uncharacterized protein (233 aa).

This sequence belongs to the asfivirus H233R family.

This is an uncharacterized protein from African swine fever virus (strain Badajoz 1971 Vero-adapted) (Ba71V).